We begin with the raw amino-acid sequence, 521 residues long: ATP synthase subunit beta (521 aa).

Composition is skewed to low complexity over residues 1–21 (MAKA…AAKA) and 28–42 (PKTT…TKSG). Positions 1-42 (MAKAATPKTTAAAEAKPAAKAPAKKAAPKTTAAAKPAATKSG) are disordered. 199–206 (GGAGVGKT) is an ATP binding site.

The protein belongs to the ATPase alpha/beta chains family. As to quaternary structure, F-type ATPases have 2 components, CF(1) - the catalytic core - and CF(0) - the membrane proton channel. CF(1) has five subunits: alpha(3), beta(3), gamma(1), delta(1), epsilon(1). CF(0) has three main subunits: a(1), b(2) and c(9-12). The alpha and beta chains form an alternating ring which encloses part of the gamma chain. CF(1) is attached to CF(0) by a central stalk formed by the gamma and epsilon chains, while a peripheral stalk is formed by the delta and b chains.

Its subcellular location is the cell inner membrane. The enzyme catalyses ATP + H2O + 4 H(+)(in) = ADP + phosphate + 5 H(+)(out). Functionally, produces ATP from ADP in the presence of a proton gradient across the membrane. The catalytic sites are hosted primarily by the beta subunits. This is ATP synthase subunit beta from Brucella canis (strain ATCC 23365 / NCTC 10854 / RM-666).